A 250-amino-acid chain; its full sequence is NADH-quinone oxidoreductase subunit C (250 aa).

Disordered stretches follow at residues 1–33 and 228–250; these read MSDD…PTGE and LGGV…RSYN.

The protein belongs to the complex I 30 kDa subunit family. NDH-1 is composed of 14 different subunits. Subunits NuoB, C, D, E, F, and G constitute the peripheral sector of the complex.

Its subcellular location is the cell membrane. It carries out the reaction a quinone + NADH + 5 H(+)(in) = a quinol + NAD(+) + 4 H(+)(out). Its function is as follows. NDH-1 shuttles electrons from NADH, via FMN and iron-sulfur (Fe-S) centers, to quinones in the respiratory chain. The immediate electron acceptor for the enzyme in this species is believed to be a menaquinone. Couples the redox reaction to proton translocation (for every two electrons transferred, four hydrogen ions are translocated across the cytoplasmic membrane), and thus conserves the redox energy in a proton gradient. The protein is NADH-quinone oxidoreductase subunit C of Nocardioides sp. (strain ATCC BAA-499 / JS614).